We begin with the raw amino-acid sequence, 896 residues long: Myelin regulatory factor-like protein (896 aa).

A DNA-binding region (NDT80) is located at residues 111–403 (GLPHRTFHNC…SNPGQFENDI (293 aa)). Positions 449–557 (SDSRAKQNVQ…KLTNNLEERI (109 aa)) constitute a Peptidase S74 domain. Residues 541–573 (GAVKQLCKLTNNLEERIEELEIWNRKLARLKRL) are a coiled coil. Residues 622–638 (VFQSLVITLIAVMAFCL) form a helical membrane-spanning segment. A compositionally biased stretch (polar residues) spans 648–658 (APSSNLTSSQE). The interval 648–672 (APSSNLTSSQEPALPSTASPSAPNT) is disordered. The segment covering 659–672 (PALPSTASPSAPNT) has biased composition (low complexity).

Belongs to the MRF family.

It is found in the membrane. This Bos taurus (Bovine) protein is Myelin regulatory factor-like protein (MYRFL).